The sequence spans 90 residues: Lantipeptide prochlorosin 1.7 (90 aa).

Positions 1–68 (MSEEQLKAFI…DAELEGVAGG (68 aa)) are excised as a propeptide. 2,3-didehydrobutyrine is present on residues Thr-69 and Thr-73. The segment at residues 76 to 79 (SITC) is a cross-link (lanthionine (Ser-Cys)). Cross-links (beta-methyllanthionine (Thr-Cys)) lie at residues 78–82 (TCETC) and 81–90 (TCDLLVGKMC).

Cross-links are proved in vitro, when coepressed in E.coli with the ProcM lanthionine synthetase. In terms of processing, the lanthionine residue has a DL configuration (with 2S,6R stereochemistry), whereas the beta-methyllanthionine residues have a DL configuration (with 2S,3S,6R stereochemistry). Post-translationally, maturation of prochlorosin involves the enzymatic conversion of Thr, and Ser into dehydrated AA and the formation of thioether bonds with cysteines. This is followed by membrane translocation and cleavage of the modified precursor.

Its subcellular location is the secreted. Functionally, lanthionine-containing peptide (lantipeptide) with unknown function. Does not show antibiotic activity against Lactococcus lactis 117 and Bacillus subtilis 6633 bacteria. Organisms that produce this peptide live in oligotrophic environments at very dilute concentrations, suggesting this peptide is not secreted to influence other bacteria. The polypeptide is Lantipeptide prochlorosin 1.7 (Prochlorococcus marinus (strain MIT 9313)).